A 292-amino-acid chain; its full sequence is Hemin import ATP-binding protein HmuV (292 aa).

The 234-residue stretch at 38 to 271 (LRADGIAVTR…ELLTRVYGHP (234 aa)) folds into the ABC transporter domain. ATP is bound at residue 70–77 (GPNGAGKS).

Belongs to the ABC transporter superfamily. Heme (hemin) importer (TC 3.A.1.14.5) family. The complex is composed of two ATP-binding proteins (HmuV), two transmembrane proteins (HmuU) and a solute-binding protein (HmuT).

It localises to the cell membrane. Part of the ABC transporter complex HmuTUV involved in hemin import. Responsible for energy coupling to the transport system. In Rhodococcus jostii (strain RHA1), this protein is Hemin import ATP-binding protein HmuV.